Reading from the N-terminus, the 378-residue chain is Lipid-A-disaccharide synthase (378 aa).

Belongs to the LpxB family.

It catalyses the reaction a lipid X + a UDP-2-N,3-O-bis[(3R)-3-hydroxyacyl]-alpha-D-glucosamine = a lipid A disaccharide + UDP + H(+). It functions in the pathway bacterial outer membrane biogenesis; LPS lipid A biosynthesis. Its function is as follows. Condensation of UDP-2,3-diacylglucosamine and 2,3-diacylglucosamine-1-phosphate to form lipid A disaccharide, a precursor of lipid A, a phosphorylated glycolipid that anchors the lipopolysaccharide to the outer membrane of the cell. This is Lipid-A-disaccharide synthase from Pseudomonas paraeruginosa (strain DSM 24068 / PA7) (Pseudomonas aeruginosa (strain PA7)).